The following is a 175-amino-acid chain: Adenylate kinase isoenzyme 6 homolog (175 aa).

ATP-binding residues include Gly18, Gly20, Lys21, Thr22, and Thr23. The NMPbind stretch occupies residues 38–61 (CIGDVVKENHLHFGFDEKWKTYDV). An LID region spans residues 113–123 (SRGYSLEKIQE). Arg114 is an ATP binding site.

The protein belongs to the adenylate kinase family. AK6 subfamily. Interacts with small ribosomal subunit protein uS11. Not a structural component of 43S pre-ribosomes, but transiently interacts with them by binding to uS11.

Its subcellular location is the cytoplasm. The protein localises to the nucleus. It catalyses the reaction AMP + ATP = 2 ADP. The enzyme catalyses ATP + H2O = ADP + phosphate + H(+). In terms of biological role, broad-specificity nucleoside monophosphate (NMP) kinase that catalyzes the reversible transfer of the terminal phosphate group between nucleoside triphosphates and monophosphates. Also has ATPase activity. Involved in the late cytoplasmic maturation steps of the 40S ribosomal particles, specifically 18S rRNA maturation. While NMP activity is not required for ribosome maturation, ATPase activity is. Associates transiently with small ribosomal subunit protein uS11. ATP hydrolysis breaks the interaction with uS11. May temporarily remove uS11 from the ribosome to enable a conformational change of the ribosomal RNA that is needed for the final maturation step of the small ribosomal subunit. Its NMP activity may have a role in nuclear energy homeostasis. The protein is Adenylate kinase isoenzyme 6 homolog (fap7) of Schizosaccharomyces pombe (strain 972 / ATCC 24843) (Fission yeast).